A 73-amino-acid chain; its full sequence is Sec-independent protein translocase protein TatA (73 aa).

The chain crosses the membrane as a helical span at residues 1–21 (MFGLGAPELILILILALIIFG). The segment at 52-73 (EAAKIDDGNNNSDKEKATRQAS) is disordered.

Belongs to the TatA/E family. In terms of assembly, forms a complex with TatC.

Its subcellular location is the cell membrane. Its function is as follows. Part of the twin-arginine translocation (Tat) system that transports large folded proteins containing a characteristic twin-arginine motif in their signal peptide across membranes. TatA could form the protein-conducting channel of the Tat system. This Moorella thermoacetica (strain ATCC 39073 / JCM 9320) protein is Sec-independent protein translocase protein TatA.